Reading from the N-terminus, the 199-residue chain is MKKHKNQMYLIKIFIALAVITGIIYLYLFYSSFEPSQIYINTKVSDKNNSQAIKFALKDQKGKVFNDKDLKGHLSLIYFGVTYSLDDENALKKIEDIIKILQKENIVVQTVFITLDPINDTSEVLKKYLENIDNNFIGLTGTIDDITQVANEFKVFYEPKTFDTETGKYELKHSNFVYLISSDGKFLKHYCLGLPKNDR.

It belongs to the SCO1/2 family.

This chain is SCO2-like protein RBE_0029, found in Rickettsia bellii (strain RML369-C).